A 483-amino-acid polypeptide reads, in one-letter code: UDP-N-acetylmuramoyl-L-alanyl-D-glutamate--2,6-diaminopimelate ligase (483 aa).

S30 contacts UDP-N-acetyl-alpha-D-muramoyl-L-alanyl-D-glutamate. 109 to 115 contributes to the ATP binding site; sequence GTNGKTT. UDP-N-acetyl-alpha-D-muramoyl-L-alanyl-D-glutamate-binding positions include 151–152, S178, and R186; that span reads TT. K218 carries the N6-carboxylysine modification. Meso-2,6-diaminopimelate-binding positions include R380, 403-406, G453, and E457; that span reads DNPR. The Meso-diaminopimelate recognition motif motif lies at 403–406; it reads DNPR.

The protein belongs to the MurCDEF family. MurE subfamily. It depends on Mg(2+) as a cofactor. Carboxylation is probably crucial for Mg(2+) binding and, consequently, for the gamma-phosphate positioning of ATP.

It is found in the cytoplasm. The enzyme catalyses UDP-N-acetyl-alpha-D-muramoyl-L-alanyl-D-glutamate + meso-2,6-diaminopimelate + ATP = UDP-N-acetyl-alpha-D-muramoyl-L-alanyl-gamma-D-glutamyl-meso-2,6-diaminopimelate + ADP + phosphate + H(+). It participates in cell wall biogenesis; peptidoglycan biosynthesis. Functionally, catalyzes the addition of meso-diaminopimelic acid to the nucleotide precursor UDP-N-acetylmuramoyl-L-alanyl-D-glutamate (UMAG) in the biosynthesis of bacterial cell-wall peptidoglycan. The polypeptide is UDP-N-acetylmuramoyl-L-alanyl-D-glutamate--2,6-diaminopimelate ligase (Chlamydia abortus (strain DSM 27085 / S26/3) (Chlamydophila abortus)).